The primary structure comprises 26 residues: Aralin B chain (26 aa).

As to quaternary structure, disulfide-linked dimer of A and B chains. Glycosylated. High-mannose type oligosaccharides.

Lectin specific for galactose (Gal) and its derivatives. Induces apoptosis. Has cytotoxic activity against several human cancer cell lines. Is less cytotoxic to normal human cells. This chain is Aralin B chain, found in Aralia elata (Japanese angelica tree).